The primary structure comprises 362 residues: Histidinol-phosphate aminotransferase (362 aa).

Position 218 is an N6-(pyridoxal phosphate)lysine (K218).

The protein belongs to the class-II pyridoxal-phosphate-dependent aminotransferase family. Histidinol-phosphate aminotransferase subfamily. Homodimer. Pyridoxal 5'-phosphate is required as a cofactor.

The catalysed reaction is L-histidinol phosphate + 2-oxoglutarate = 3-(imidazol-4-yl)-2-oxopropyl phosphate + L-glutamate. The protein operates within amino-acid biosynthesis; L-histidine biosynthesis; L-histidine from 5-phospho-alpha-D-ribose 1-diphosphate: step 7/9. The protein is Histidinol-phosphate aminotransferase of Xanthomonas campestris pv. campestris (strain ATCC 33913 / DSM 3586 / NCPPB 528 / LMG 568 / P 25).